Consider the following 57-residue polypeptide: Large ribosomal subunit protein bL32 (57 aa).

The disordered stretch occupies residues 1 to 22 (MAVPKKKTSKSKRDKRRATWRH).

Belongs to the bacterial ribosomal protein bL32 family.

The sequence is that of Large ribosomal subunit protein bL32 from Nostoc punctiforme (strain ATCC 29133 / PCC 73102).